A 421-amino-acid chain; its full sequence is Signal recognition particle receptor FtsY (421 aa).

Basic residues predominate over residues 1 to 10 (MFSFFRRKKK). A disordered region spans residues 1–31 (MFSFFRRKKKQETPALEEAQIQETAAKAESE). Residues 228–235 (GINGAGKT), 309–313 (DTAGR), and 373–376 (TKLD) each bind GTP.

The protein belongs to the GTP-binding SRP family. FtsY subfamily. In terms of assembly, part of the signal recognition particle protein translocation system, which is composed of SRP and FtsY. SRP is a ribonucleoprotein composed of Ffh and a 4.5S RNA molecule.

Its subcellular location is the cell inner membrane. The protein localises to the cytoplasm. It catalyses the reaction GTP + H2O = GDP + phosphate + H(+). Its function is as follows. Involved in targeting and insertion of nascent membrane proteins into the cytoplasmic membrane. Acts as a receptor for the complex formed by the signal recognition particle (SRP) and the ribosome-nascent chain (RNC). Interaction with SRP-RNC leads to the transfer of the RNC complex to the Sec translocase for insertion into the membrane, the hydrolysis of GTP by both Ffh and FtsY, and the dissociation of the SRP-FtsY complex into the individual components. The sequence is that of Signal recognition particle receptor FtsY from Neisseria meningitidis serogroup A / serotype 4A (strain DSM 15465 / Z2491).